Reading from the N-terminus, the 370-residue chain is Chorismate synthase (370 aa).

R47 contributes to the NADP(+) binding site. FMN-binding positions include 124-126 (RSS), G286, 301-305 (KPTAT), and R327.

Belongs to the chorismate synthase family. Homotetramer. FMNH2 serves as cofactor.

It carries out the reaction 5-O-(1-carboxyvinyl)-3-phosphoshikimate = chorismate + phosphate. It participates in metabolic intermediate biosynthesis; chorismate biosynthesis; chorismate from D-erythrose 4-phosphate and phosphoenolpyruvate: step 7/7. Its function is as follows. Catalyzes the anti-1,4-elimination of the C-3 phosphate and the C-6 proR hydrogen from 5-enolpyruvylshikimate-3-phosphate (EPSP) to yield chorismate, which is the branch point compound that serves as the starting substrate for the three terminal pathways of aromatic amino acid biosynthesis. This reaction introduces a second double bond into the aromatic ring system. The chain is Chorismate synthase from Trichodesmium erythraeum (strain IMS101).